The chain runs to 490 residues: Cardiolipin synthase A (490 aa).

Helical transmembrane passes span 20 to 40 (LGLL…HAVL) and 49 to 69 (IAWA…YLVF). PLD phosphodiesterase domains are found at residues 229 to 256 (VNFR…GVEY) and 403 to 430 (QPGF…DNRS). Residues H234, K236, D241, H408, K410, and D415 contribute to the active site.

It belongs to the phospholipase D family. Cardiolipin synthase subfamily. ClsA sub-subfamily.

Its subcellular location is the cell inner membrane. It catalyses the reaction 2 a 1,2-diacyl-sn-glycero-3-phospho-(1'-sn-glycerol) = a cardiolipin + glycerol. Functionally, catalyzes the reversible phosphatidyl group transfer from one phosphatidylglycerol molecule to another to form cardiolipin (CL) (diphosphatidylglycerol) and glycerol. The protein is Cardiolipin synthase A of Pseudomonas aeruginosa (strain LESB58).